The primary structure comprises 204 residues: Thiamine-phosphate synthase (204 aa).

Residues 32 to 36 (QLRMK) and Asp-64 each bind 4-amino-2-methyl-5-(diphosphooxymethyl)pyrimidine. The Mg(2+) site is built by Asp-65 and Asp-84. Thr-103 provides a ligand contact to 4-amino-2-methyl-5-(diphosphooxymethyl)pyrimidine. 129-131 (TTT) provides a ligand contact to 2-[(2R,5Z)-2-carboxy-4-methylthiazol-5(2H)-ylidene]ethyl phosphate. Lys-132 contributes to the 4-amino-2-methyl-5-(diphosphooxymethyl)pyrimidine binding site. Position 165 (Gly-165) interacts with 2-[(2R,5Z)-2-carboxy-4-methylthiazol-5(2H)-ylidene]ethyl phosphate.

Belongs to the thiamine-phosphate synthase family. Mg(2+) is required as a cofactor.

It carries out the reaction 2-[(2R,5Z)-2-carboxy-4-methylthiazol-5(2H)-ylidene]ethyl phosphate + 4-amino-2-methyl-5-(diphosphooxymethyl)pyrimidine + 2 H(+) = thiamine phosphate + CO2 + diphosphate. The catalysed reaction is 2-(2-carboxy-4-methylthiazol-5-yl)ethyl phosphate + 4-amino-2-methyl-5-(diphosphooxymethyl)pyrimidine + 2 H(+) = thiamine phosphate + CO2 + diphosphate. It catalyses the reaction 4-methyl-5-(2-phosphooxyethyl)-thiazole + 4-amino-2-methyl-5-(diphosphooxymethyl)pyrimidine + H(+) = thiamine phosphate + diphosphate. It functions in the pathway cofactor biosynthesis; thiamine diphosphate biosynthesis; thiamine phosphate from 4-amino-2-methyl-5-diphosphomethylpyrimidine and 4-methyl-5-(2-phosphoethyl)-thiazole: step 1/1. Functionally, condenses 4-methyl-5-(beta-hydroxyethyl)thiazole monophosphate (THZ-P) and 2-methyl-4-amino-5-hydroxymethyl pyrimidine pyrophosphate (HMP-PP) to form thiamine monophosphate (TMP). The sequence is that of Thiamine-phosphate synthase from Bacteroides fragilis (strain ATCC 25285 / DSM 2151 / CCUG 4856 / JCM 11019 / LMG 10263 / NCTC 9343 / Onslow / VPI 2553 / EN-2).